Consider the following 29-residue polypeptide: Cytochrome c oxidase subunit 7A1, mitochondrial (29 aa).

A compositionally biased stretch (basic and acidic residues) spans 1–13 (LENRVAEKQKLFQ). The disordered stretch occupies residues 1–29 (LENRVAEKQKLFQEDNGLPVHLKGGATDN).

This sequence belongs to the cytochrome c oxidase VIIa family. Component of the complex IV (CIV, cytochrome c oxidase), a multisubunit enzyme composed of 14 subunits. The complex is composed of a catalytic core of 3 subunits MT-CO1, MT-CO2 and MT-CO3, encoded in the mitochondrial DNA, and 11 supernumerary subunits COX4I1 (or COX4I2), COX5A, COX5B, COX6A2 (or COX6A1), COX6B1 (or COX6B2), COX6C, COX7A1 (or COX7A2), COX7B, COX7C, COX8B and NDUFA4, which are encoded in the nuclear genome. The complex exists as a monomer or a dimer and forms supercomplexes (SCs) in the inner mitochondrial membrane with NADH-ubiquinone oxidoreductase (complex I, CI) and ubiquinol-cytochrome c oxidoreductase (cytochrome b-c1 complex, complex III, CIII), resulting in different assemblies (supercomplex SCI(1)III(2)IV(1) and megacomplex MCI(2)III(2)IV(2)).

Its subcellular location is the mitochondrion inner membrane. It functions in the pathway energy metabolism; oxidative phosphorylation. Component of the mitochondrial respiratory complex IV (CIV, also named cytochrome c oxidase complex), the last enzyme in the mitochondrial electron transport chain which drives oxidative phosphorylation. The CIV complex is the component of the respiratory chain that catalyzes the reduction of oxygen to water. Acts as an assembly factor that specifically drives the homodimerization of CIV complexes, mediating the formation of mitochondrial respiratory supercomplexes (respirasomes) containing two CIV: supercomplxes with two molecules of CIV show improved activity. Despite being highly expressed in brown adipose tissue, not required for thermogenesis. The polypeptide is Cytochrome c oxidase subunit 7A1, mitochondrial (COX7A1) (Ovis aries (Sheep)).